The primary structure comprises 632 residues: X-ray repair cross-complementing protein 5 (632 aa).

Arg52 serves as the catalytic Schiff-base intermediate with DNA; for 5'-deoxyribose-5-phosphate lyase activity. One can recognise a Ku domain in the interval 283-490 (LYLNKDLSFS…VDKMKGIIQK (208 aa)). The segment at 555–578 (DYSPEGKAAKRKQAGDAQAEKRPK) is disordered. Residues 595–629 (LGKLTVSALKDTCRHYGLRSGGKKQELIDALTEYF) enclose the SAP domain.

Belongs to the ku70 family. Heterodimer composed of XRCC5/Ku80 and XRCC6/Ku70. Component of the core long-range non-homologous end joining (NHEJ) complex (also named DNA-PK complex) composed of PRKDC, LIG4, XRCC4, XRCC6/Ku70, XRCC5/Ku86 and NHEJ1/XLF. Additional component of the NHEJ complex includes PAXX. Following autophosphorylation, PRKDC dissociates from DNA, leading to formation of the short-range NHEJ complex, composed of LIG4, XRCC4, XRCC6/Ku70, XRCC5/Ku86 and NHEJ1/XLF. In terms of processing, phosphorylated on serine residues.

Its subcellular location is the nucleus. The protein localises to the chromosome. Single-stranded DNA-dependent ATP-dependent helicase that plays a key role in DNA non-homologous end joining (NHEJ) by recruiting DNA-PK to DNA. Required for double-strand break repair and V(D)J recombination. Also has a role in chromosome translocation. Has a role in chromosome translocation. The DNA helicase II complex binds preferentially to fork-like ends of double-stranded DNA in a cell cycle-dependent manner. It works in the 3'-5' direction. During NHEJ, the XRCC5-XRRC6 dimer performs the recognition step: it recognizes and binds to the broken ends of the DNA and protects them from further resection. Binding to DNA may be mediated by XRCC6. The XRCC5-XRRC6 dimer acts as a regulatory subunit of the DNA-dependent protein kinase complex DNA-PK by increasing the affinity of the catalytic subunit PRKDC to DNA by 100-fold. The XRCC5-XRRC6 dimer is probably involved in stabilizing broken DNA ends and bringing them together. The assembly of the DNA-PK complex to DNA ends is required for the NHEJ ligation step. Probably also acts as a 5'-deoxyribose-5-phosphate lyase (5'-dRP lyase), by catalyzing the beta-elimination of the 5' deoxyribose-5-phosphate at an abasic site near double-strand breaks. 5'-dRP lyase activity allows to 'clean' the termini of abasic sites, a class of nucleotide damage commonly associated with strand breaks, before such broken ends can be joined. The XRCC5-XRRC6 dimer together with APEX1 acts as a negative regulator of transcription. The polypeptide is X-ray repair cross-complementing protein 5 (XRCC6) (Gallus gallus (Chicken)).